Here is a 297-residue protein sequence, read N- to C-terminus: Aspartate carbamoyltransferase catalytic subunit (297 aa).

Carbamoyl phosphate-binding residues include Arg-48 and Thr-49. Lys-76 is a binding site for L-aspartate. Residues Arg-98, His-129, and Gln-132 each contribute to the carbamoyl phosphate site. Residues Arg-162 and Arg-214 each contribute to the L-aspartate site. 2 residues coordinate carbamoyl phosphate: Ala-257 and Pro-258.

The protein belongs to the aspartate/ornithine carbamoyltransferase superfamily. ATCase family. In terms of assembly, heterododecamer (2C3:3R2) of six catalytic PyrB chains organized as two trimers (C3), and six regulatory PyrI chains organized as three dimers (R2).

It carries out the reaction carbamoyl phosphate + L-aspartate = N-carbamoyl-L-aspartate + phosphate + H(+). It functions in the pathway pyrimidine metabolism; UMP biosynthesis via de novo pathway; (S)-dihydroorotate from bicarbonate: step 2/3. In terms of biological role, catalyzes the condensation of carbamoyl phosphate and aspartate to form carbamoyl aspartate and inorganic phosphate, the committed step in the de novo pyrimidine nucleotide biosynthesis pathway. In Leuconostoc mesenteroides subsp. mesenteroides (strain ATCC 8293 / DSM 20343 / BCRC 11652 / CCM 1803 / JCM 6124 / NCDO 523 / NBRC 100496 / NCIMB 8023 / NCTC 12954 / NRRL B-1118 / 37Y), this protein is Aspartate carbamoyltransferase catalytic subunit.